The following is a 335-amino-acid chain: Nucleotide-binding protein CYA_0911 (335 aa).

Residue 20–27 (GLTGSGKT) participates in ATP binding. A disordered region spans residues 306–335 (ARFGPPPPAAGVEQQQVRIPLAGVPAPPHD).

It belongs to the RapZ-like family.

Its function is as follows. Displays ATPase and GTPase activities. This is Nucleotide-binding protein CYA_0911 from Synechococcus sp. (strain JA-3-3Ab) (Cyanobacteria bacterium Yellowstone A-Prime).